A 354-amino-acid chain; its full sequence is Peptide chain release factor 1 (354 aa).

Glutamine 232 carries the post-translational modification N5-methylglutamine.

Belongs to the prokaryotic/mitochondrial release factor family. Post-translationally, methylated by PrmC. Methylation increases the termination efficiency of RF1.

Its subcellular location is the cytoplasm. Functionally, peptide chain release factor 1 directs the termination of translation in response to the peptide chain termination codons UAG and UAA. The polypeptide is Peptide chain release factor 1 (Jannaschia sp. (strain CCS1)).